The chain runs to 206 residues: LexA repressor (206 aa).

Residues 28 to 48 (RAEIARELGFRSANAAEEHLK) constitute a DNA-binding region (H-T-H motif). Catalysis depends on for autocatalytic cleavage activity residues serine 123 and lysine 160.

Belongs to the peptidase S24 family. In terms of assembly, homodimer.

The enzyme catalyses Hydrolysis of Ala-|-Gly bond in repressor LexA.. Represses a number of genes involved in the response to DNA damage (SOS response), including recA and lexA. In the presence of single-stranded DNA, RecA interacts with LexA causing an autocatalytic cleavage which disrupts the DNA-binding part of LexA, leading to derepression of the SOS regulon and eventually DNA repair. The chain is LexA repressor from Vibrio parahaemolyticus serotype O3:K6 (strain RIMD 2210633).